The sequence spans 130 residues: Sec-independent protein translocase protein TatB (130 aa).

The chain crosses the membrane as a helical span at residues M1–G21. The tract at residues L85–E130 is disordered. Positions D112 to E130 are enriched in polar residues.

It belongs to the TatB family. In terms of assembly, the Tat system comprises two distinct complexes: a TatABC complex, containing multiple copies of TatA, TatB and TatC subunits, and a separate TatA complex, containing only TatA subunits. Substrates initially bind to the TatABC complex, which probably triggers association of the separate TatA complex to form the active translocon.

The protein localises to the cell inner membrane. Part of the twin-arginine translocation (Tat) system that transports large folded proteins containing a characteristic twin-arginine motif in their signal peptide across membranes. Together with TatC, TatB is part of a receptor directly interacting with Tat signal peptides. TatB may form an oligomeric binding site that transiently accommodates folded Tat precursor proteins before their translocation. This Vibrio vulnificus (strain CMCP6) protein is Sec-independent protein translocase protein TatB.